The primary structure comprises 237 residues: Chloride intracellular channel protein 3 (237 aa).

The required for insertion into the membrane stretch occupies residues 1–89 (MAETTKLQLF…EEFLEETLGP (89 aa)). In terms of domain architecture, GST N-terminal spans 13-91 (ASEDGESVGH…FLEETLGPPD (79 aa)). Positions 23-26 (CPSC) match the G-site motif. C23 and C26 form a disulfide bridge. Residues 25–45 (SCQRLFMVLLLKGVPFTLTTV) form a helical membrane-spanning segment. The GST C-terminal domain maps to 69-236 (DGDVKTDTLQ…LAAYQPAVHP (168 aa)). S160 bears the Phosphoserine mark.

The protein belongs to the chloride channel CLIC family. Associated with the C-terminal of MAPK15.

It localises to the nucleus. It is found in the membrane. Its subcellular location is the cell membrane. The protein resides in the cytoplasm. The protein localises to the secreted. It localises to the extracellular space. It is found in the extracellular matrix. It catalyses the reaction chloride(in) = chloride(out). In terms of biological role, in the soluble state, catalyzes glutaredoxin-like thiol disulfide exchange reactions with reduced glutathione as electron donor. Reduced in a glutathione-dependent way and secreted into the extracellular matrix where it activates TGM2 and promotes blood vessel growth during tissue remodeling as occurs in tumorigenesis. Can reduce specific cysteines in TGM2 and regulate cofactor binding. Can insert into membranes and form outwardly rectifying chloride ion channels. May participate in cellular growth control. The protein is Chloride intracellular channel protein 3 of Mus musculus (Mouse).